A 176-amino-acid polypeptide reads, in one-letter code: Methylmalonyl-CoA epimerase, mitochondrial (176 aa).

Residues 1-36 (MARVLKAAAANAVGLFSRLQAPIPTVRASSTSQPLD) constitute a mitochondrion transit peptide. Positions 47-176 (RLNHVAIAVP…GGVLVELEQA (130 aa)) constitute a VOC domain. Residue His50 participates in Co(2+) binding. Lys114 is subject to N6-succinyllysine. Position 122 (His122) interacts with Co(2+). Lys150 is modified (N6-acetyllysine; alternate). At Lys150 the chain carries N6-succinyllysine; alternate. Glu172 contributes to the Co(2+) binding site.

Belongs to the methylmalonyl-CoA epimerase family.

Its subcellular location is the mitochondrion. The catalysed reaction is (R)-methylmalonyl-CoA = (S)-methylmalonyl-CoA. In terms of biological role, methylmalonyl-CoA epimerase involved in propionyl-CoA metabolism. The chain is Methylmalonyl-CoA epimerase, mitochondrial from Homo sapiens (Human).